The primary structure comprises 415 residues: Gamma-glutamyl phosphate reductase (415 aa).

Belongs to the gamma-glutamyl phosphate reductase family.

Its subcellular location is the cytoplasm. The catalysed reaction is L-glutamate 5-semialdehyde + phosphate + NADP(+) = L-glutamyl 5-phosphate + NADPH + H(+). The protein operates within amino-acid biosynthesis; L-proline biosynthesis; L-glutamate 5-semialdehyde from L-glutamate: step 2/2. Catalyzes the NADPH-dependent reduction of L-glutamate 5-phosphate into L-glutamate 5-semialdehyde and phosphate. The product spontaneously undergoes cyclization to form 1-pyrroline-5-carboxylate. The chain is Gamma-glutamyl phosphate reductase from Carboxydothermus hydrogenoformans (strain ATCC BAA-161 / DSM 6008 / Z-2901).